The primary structure comprises 151 residues: Globin CTT-VIII (151 aa).

Residues P4–E148 form the Globin domain. Residues H62 and H97 each coordinate heme b.

It belongs to the globin family. Homodimer.

The polypeptide is Globin CTT-VIII (CTT-8) (Chironomus thummi thummi (Midge)).